Here is a 59-residue protein sequence, read N- to C-terminus: Large ribosomal subunit protein bL32 (59 aa).

Positions methionine 1–alanine 25 are disordered.

Belongs to the bacterial ribosomal protein bL32 family.

This is Large ribosomal subunit protein bL32 from Paraburkholderia phymatum (strain DSM 17167 / CIP 108236 / LMG 21445 / STM815) (Burkholderia phymatum).